A 94-amino-acid chain; its full sequence is Phosphoribosyl-ATP pyrophosphatase (94 aa).

It belongs to the PRA-PH family.

Its subcellular location is the cytoplasm. The enzyme catalyses 1-(5-phospho-beta-D-ribosyl)-ATP + H2O = 1-(5-phospho-beta-D-ribosyl)-5'-AMP + diphosphate + H(+). It functions in the pathway amino-acid biosynthesis; L-histidine biosynthesis; L-histidine from 5-phospho-alpha-D-ribose 1-diphosphate: step 2/9. The polypeptide is Phosphoribosyl-ATP pyrophosphatase (Pyrobaculum calidifontis (strain DSM 21063 / JCM 11548 / VA1)).